We begin with the raw amino-acid sequence, 354 residues long: Uroporphyrinogen decarboxylase (354 aa).

Substrate is bound by residues 27–31, Asp77, Tyr154, Ser209, and His327; that span reads RQAGR.

This sequence belongs to the uroporphyrinogen decarboxylase family. In terms of assembly, homodimer.

It localises to the cytoplasm. It catalyses the reaction uroporphyrinogen III + 4 H(+) = coproporphyrinogen III + 4 CO2. The protein operates within porphyrin-containing compound metabolism; protoporphyrin-IX biosynthesis; coproporphyrinogen-III from 5-aminolevulinate: step 4/4. Its function is as follows. Catalyzes the decarboxylation of four acetate groups of uroporphyrinogen-III to yield coproporphyrinogen-III. This Shewanella amazonensis (strain ATCC BAA-1098 / SB2B) protein is Uroporphyrinogen decarboxylase.